Consider the following 130-residue polypeptide: Protein LLP homolog (130 aa).

The span at 1 to 21 shows a compositional bias: basic residues; it reads MAKSLRSKWKRKMRAEKRKKN. Disordered stretches follow at residues 1–23 and 57–76; these read MAKS…KNAP and QEKM…EKDD. A coiled-coil region spans residues 10–78; it reads KRKMRAEKRK…GADEEKDDMK (69 aa). K78 is covalently cross-linked (Glycyl lysine isopeptide (Lys-Gly) (interchain with G-Cter in SUMO2)). The segment covering 104 to 124 has biased composition (basic residues); sequence RQRKRLKAKREKKRGKSRAKA. The segment at 104–130 is disordered; the sequence is RQRKRLKAKREKKRGKSRAKAAKGLAW.

The protein belongs to the learning-associated protein family. Interacts with CTCF, MYO1C and with the transcriptional machinery, including RNA polymerase II and TBP. In terms of tissue distribution, widely expressed, with high levels in testis and spleen and low levels in heart. In the brain, expressed in the cortex and hippocampus, and at very low levels in the cerebellum.

It is found in the nucleus. It localises to the nucleolus. The protein localises to the chromosome. Its function is as follows. In hippocampal neurons, regulates dendritic and spine growth and synaptic transmission. The sequence is that of Protein LLP homolog (Llph) from Mus musculus (Mouse).